The chain runs to 389 residues: Succinate--CoA ligase [ADP-forming] subunit beta (389 aa).

The ATP-grasp domain occupies 9 to 236; that stretch reads RDLFEKHGVP…KTTADPLEEK (228 aa). Residues lysine 45, 52 to 54, alanine 94, and glutamate 99 contribute to the ATP site; that span reads GRG. Residues asparagine 191 and aspartate 205 each contribute to the Mg(2+) site. Substrate-binding positions include asparagine 256 and 318–320; that span reads GIT.

It belongs to the succinate/malate CoA ligase beta subunit family. As to quaternary structure, heterotetramer of two alpha and two beta subunits. It depends on Mg(2+) as a cofactor.

The catalysed reaction is succinate + ATP + CoA = succinyl-CoA + ADP + phosphate. It catalyses the reaction GTP + succinate + CoA = succinyl-CoA + GDP + phosphate. It participates in carbohydrate metabolism; tricarboxylic acid cycle; succinate from succinyl-CoA (ligase route): step 1/1. In terms of biological role, succinyl-CoA synthetase functions in the citric acid cycle (TCA), coupling the hydrolysis of succinyl-CoA to the synthesis of either ATP or GTP and thus represents the only step of substrate-level phosphorylation in the TCA. The beta subunit provides nucleotide specificity of the enzyme and binds the substrate succinate, while the binding sites for coenzyme A and phosphate are found in the alpha subunit. The protein is Succinate--CoA ligase [ADP-forming] subunit beta of Kocuria rhizophila (strain ATCC 9341 / DSM 348 / NBRC 103217 / DC2201).